The chain runs to 574 residues: Septation ring formation regulator EzrA (574 aa).

Residues 1–7 are Extracellular-facing; that stretch reads MPTGTII. Residues 8 to 26 form a helical membrane-spanning segment; it reads LIVSIVIILIIAYVACLIV. At 27-574 the chain is on the cytoplasmic side; it reads RKRNDNLLVA…YEKTREAIRY (548 aa). Positions 105-189 form a coiled coil; the sequence is SAKNAIDSID…IEVEFSEFVM (85 aa).

Belongs to the EzrA family.

Its subcellular location is the cell membrane. Negative regulator of FtsZ ring formation; modulates the frequency and position of FtsZ ring formation. Inhibits FtsZ ring formation at polar sites. Interacts either with FtsZ or with one of its binding partners to promote depolymerization. This chain is Septation ring formation regulator EzrA, found in Streptococcus suis (strain 98HAH33).